The sequence spans 338 residues: Taste receptor type 2 member 39 (338 aa).

The Extracellular portion of the chain corresponds to 1–30 (MLGRCFPPDTKEKQQLRMTKLCDPAESELS). Residues 31 to 51 (PFLITLILAVLLAEYLIGIIA) traverse the membrane as a helical segment. At 52–74 (NGFIMAIHAAEWVQNKAVSTSGR) the chain is on the cytoplasmic side. Residues 75–95 (ILVFLSVSRIALQSLMMLEIT) traverse the membrane as a helical segment. The Extracellular portion of the chain corresponds to 96 to 116 (ISSTSLSFYSEDAVYYAFKIS). Residues 117 to 137 (FIFLNFCSLWFAAWLSFFYFV) form a helical membrane-spanning segment. Residues 138-156 (KIANFSYPLFLKLRWRITG) lie on the Cytoplasmic side of the membrane. A helical transmembrane segment spans residues 157–177 (LIPWLLWLSVFISFSHSMFCI). Topologically, residues 178–205 (NICTVYCNNSFPIHSSNSTKKTYLSEIN) are extracellular. Residues N185 and N194 are each glycosylated (N-linked (GlcNAc...) asparagine). The helical transmembrane segment at 206 to 226 (VVGLAFFFNLGIVTPLIMFIL) threads the bilayer. Residues 227 to 262 (TATLLILSLKRHTLHMGSNATGSNDPSMEAHMGAIK) lie on the Cytoplasmic side of the membrane. The chain crosses the membrane as a helical span at residues 263–283 (AISYFLILYIFNAVALFIYLS). At 284 to 291 (NMFDINSL) the chain is on the extracellular side. Residues 292–312 (WNNLCQIIMAAYPASHSILLI) form a helical membrane-spanning segment. The Cytoplasmic portion of the chain corresponds to 313–338 (QDNPGLRRAWKRLQLRLHLYPKEWTL).

The protein belongs to the G-protein coupled receptor T2R family. As to expression, expressed in subsets of taste receptor cells of the tongue and exclusively in gustducin-positive cells.

It is found in the membrane. Receptor that may play a role in the perception of bitterness and is gustducin-linked. May play a role in sensing the chemical composition of the gastrointestinal content. The activity of this receptor may stimulate alpha gustducin, mediate PLC-beta-2 activation and lead to the gating of TRPM5. The polypeptide is Taste receptor type 2 member 39 (TAS2R39) (Homo sapiens (Human)).